The primary structure comprises 259 residues: Global transcriptional regulator CodY (259 aa).

The interval 1 to 155 is GAF domain; it reads MELLAKTRKL…SSTVVGMEIL (155 aa). The segment at residues 203–222 is a DNA-binding region (H-T-H motif); sequence ASKIADRVGITRSVIVNALR. At Ser215 the chain carries Phosphoserine.

This sequence belongs to the CodY family.

It localises to the cytoplasm. DNA-binding global transcriptional regulator which is involved in the adaptive response to starvation and acts by directly or indirectly controlling the expression of numerous genes in response to nutrient availability. During rapid exponential growth, CodY is highly active and represses genes whose products allow adaptation to nutrient depletion. This is Global transcriptional regulator CodY from Bacillus cereus (strain B4264).